The primary structure comprises 213 residues: Uridine kinase (213 aa).

15–22 (GASASGKS) contributes to the ATP binding site.

This sequence belongs to the uridine kinase family.

Its subcellular location is the cytoplasm. It carries out the reaction uridine + ATP = UMP + ADP + H(+). The enzyme catalyses cytidine + ATP = CMP + ADP + H(+). Its pathway is pyrimidine metabolism; CTP biosynthesis via salvage pathway; CTP from cytidine: step 1/3. The protein operates within pyrimidine metabolism; UMP biosynthesis via salvage pathway; UMP from uridine: step 1/1. This chain is Uridine kinase, found in Salmonella paratyphi A (strain ATCC 9150 / SARB42).